The primary structure comprises 300 residues: L-arabinolactonase (300 aa).

Residues Glu-22, Asn-156, and Asp-205 each coordinate a divalent metal cation.

This sequence belongs to the SMP-30/CGR1 family. A divalent metal cation is required as a cofactor.

The enzyme catalyses L-arabinono-1,4-lactone + H2O = L-arabinonate + H(+). Catalyzes the cleavage of L-arabino-gamma-lactone to L-arabonate. Is involved in a degradation pathway of L-arabinose that allows A.brasilense to grow on L-arabinose as a sole carbon source. Can also use D-galactono-1,4-lactone as substrate in vitro; however, the enzyme is probably not involved in the metabolism of D-galactose in vivo. The chain is L-arabinolactonase (araB) from Azospirillum brasilense.